The primary structure comprises 92 residues: Muconolactone Delta-isomerase (92 aa).

Belongs to the muconolactone Delta-isomerase family. In terms of assembly, homodecamer.

The catalysed reaction is (S)-muconolactone = (4,5-dihydro-5-oxofuran-2-yl)-acetate. It participates in aromatic compound metabolism; beta-ketoadipate pathway; 5-oxo-4,5-dihydro-2-furylacetate from catechol: step 3/3. This is Muconolactone Delta-isomerase (catC) from Cupriavidus pinatubonensis (strain JMP 134 / LMG 1197) (Cupriavidus necator (strain JMP 134)).